Reading from the N-terminus, the 218-residue chain is Large ribosomal subunit protein bL25 (218 aa).

The interval 186–218 (AVEEEVPAEDEEIMPEPEVIGEEDEGDEEEPEE) is disordered.

It belongs to the bacterial ribosomal protein bL25 family. CTC subfamily. Part of the 50S ribosomal subunit; part of the 5S rRNA/L5/L18/L25 subcomplex. Contacts the 5S rRNA. Binds to the 5S rRNA independently of L5 and L18.

In terms of biological role, this is one of the proteins that binds to the 5S RNA in the ribosome where it forms part of the central protuberance. The sequence is that of Large ribosomal subunit protein bL25 from Halothermothrix orenii (strain H 168 / OCM 544 / DSM 9562).